The following is a 632-amino-acid chain: Bestrophin homolog 24 (632 aa).

4 consecutive transmembrane segments (helical) span residues 28-48, 83-103, 234-254, and 271-291; these read IWKA…ILSV, GFFV…IGFI, IMYP…CLLA, and LYFP…MKVA. 2 disordered regions span residues 491–516 and 562–632; these read LSNK…EHPF and ETEV…TKFE. The segment covering 563–602 has biased composition (basic and acidic residues); the sequence is TEVKRDEKKKKEEELREEGDNGKEEKDNKEDKKEEQDRPS. Positions 623-632 are enriched in basic residues; that stretch reads PHLRPPTKFE.

The protein belongs to the anion channel-forming bestrophin (TC 1.A.46) family. Calcium-sensitive chloride channel subfamily. As to quaternary structure, forms oligomers.

The protein resides in the cell membrane. Functionally, forms chloride channels. This Caenorhabditis elegans protein is Bestrophin homolog 24 (best-24).